The following is a 337-amino-acid chain: Inositol 2-dehydrogenase (337 aa).

Belongs to the Gfo/Idh/MocA family. In terms of assembly, homotetramer.

It catalyses the reaction myo-inositol + NAD(+) = scyllo-inosose + NADH + H(+). In terms of biological role, involved in the oxidation of myo-inositol (MI) to 2-keto-myo-inositol (2KMI or 2-inosose). This Burkholderia vietnamiensis (strain G4 / LMG 22486) (Burkholderia cepacia (strain R1808)) protein is Inositol 2-dehydrogenase.